Reading from the N-terminus, the 302-residue chain is Glycine--tRNA ligase alpha subunit (302 aa).

This sequence belongs to the class-II aminoacyl-tRNA synthetase family. As to quaternary structure, tetramer of two alpha and two beta subunits.

Its subcellular location is the cytoplasm. It catalyses the reaction tRNA(Gly) + glycine + ATP = glycyl-tRNA(Gly) + AMP + diphosphate. This chain is Glycine--tRNA ligase alpha subunit, found in Baumannia cicadellinicola subsp. Homalodisca coagulata.